The chain runs to 296 residues: uncharacterized protein (296 aa).

A chloroplast-targeting transit peptide spans Met1 to Val57.

It belongs to the NAD(P)-dependent epimerase/dehydratase family.

It localises to the plastid. The protein localises to the chloroplast. It is found in the plastoglobule. This is an uncharacterized protein from Arabidopsis thaliana (Mouse-ear cress).